A 218-amino-acid polypeptide reads, in one-letter code: Keratin-associated protein 10-8 (218 aa).

Residues 26 to 202 form a 16 X 5 AA repeats of C-C-X(3) region; sequence CGNQVSSPSA…FCQPSCCHPA (177 aa). Repeat copies occupy residues 50-54, 55-59, 60-64, 86-90, 96-100, 101-105, 111-115, 121-125, 131-135, 136-140, 141-145, 151-155, 161-167, 168-172, 187-191, and 198-202.

Belongs to the KRTAP type 10 family. Interacts with hair keratins.

Its function is as follows. In the hair cortex, hair keratin intermediate filaments are embedded in an interfilamentous matrix, consisting of hair keratin-associated proteins (KRTAP), which are essential for the formation of a rigid and resistant hair shaft through their extensive disulfide bond cross-linking with abundant cysteine residues of hair keratins. The matrix proteins include the high-sulfur and high-glycine-tyrosine keratins. The protein is Keratin-associated protein 10-8 of Bos taurus (Bovine).